A 118-amino-acid chain; its full sequence is Small ribosomal subunit protein uS13 (118 aa).

The disordered stretch occupies residues 94-118 (SLPLRGQRTKTNARTRKGPRKPIRK).

It belongs to the universal ribosomal protein uS13 family. As to quaternary structure, part of the 30S ribosomal subunit. Forms a loose heterodimer with protein S19. Forms two bridges to the 50S subunit in the 70S ribosome.

Functionally, located at the top of the head of the 30S subunit, it contacts several helices of the 16S rRNA. In the 70S ribosome it contacts the 23S rRNA (bridge B1a) and protein L5 of the 50S subunit (bridge B1b), connecting the 2 subunits; these bridges are implicated in subunit movement. Contacts the tRNAs in the A and P-sites. This is Small ribosomal subunit protein uS13 from Shewanella violacea (strain JCM 10179 / CIP 106290 / LMG 19151 / DSS12).